We begin with the raw amino-acid sequence, 420 residues long: D-tagatose-1,6-bisphosphate aldolase subunit GatZ (420 aa).

This sequence belongs to the GatZ/KbaZ family. GatZ subfamily. Forms a complex with GatY.

The protein operates within carbohydrate metabolism; D-tagatose 6-phosphate degradation; D-glyceraldehyde 3-phosphate and glycerone phosphate from D-tagatose 6-phosphate: step 2/2. Functionally, component of the tagatose-1,6-bisphosphate aldolase GatYZ that is required for full activity and stability of the Y subunit. Could have a chaperone-like function for the proper and stable folding of GatY. When expressed alone, GatZ does not show any aldolase activity. Is involved in the catabolism of galactitol. In Escherichia coli O8 (strain IAI1), this protein is D-tagatose-1,6-bisphosphate aldolase subunit GatZ.